Reading from the N-terminus, the 418-residue chain is Putative competence-damage inducible protein (418 aa).

Belongs to the CinA family.

The protein is Putative competence-damage inducible protein of Streptococcus pneumoniae (strain JJA).